Reading from the N-terminus, the 1064-residue chain is Serine protease inhibitor Kazal-type 5 (1064 aa).

Positions Met1 to Ser22 are cleaved as a signal peptide. A Kazal-like 1; atypical domain is found at Glu28 to Cys66. Disulfide bonds link Cys30/Cys66, Cys44/Cys63, Cys97/Cys133, Cys111/Cys130, Cys119/Cys151, Cys161/Cys197, Cys175/Cys194, Cys225/Cys261, Cys239/Cys258, Cys297/Cys333, Cys311/Cys330, Cys367/Cys403, Cys381/Cys400, Cys437/Cys473, Cys451/Cys470, Cys496/Cys532, Cys510/Cys529, Cys567/Cys603, Cys581/Cys600, Cys632/Cys668, and Cys646/Cys665. Kazal-like domains are found at residues Ala91–Ser153, Asn155–Ile216, Asn219–Glu285, Arg291–Arg352, Thr361–Asn423, Ala431–Arg489, Glu490–Gly551, Glu561–Lys622, Glu626–Arg688, Gly701–Tyr757, Glu768–Ser830, Asn843–Ser905, Asn910–Ser971, and Ser987–Glu1048. Over residues Asn676–Arg688 the composition is skewed to basic and acidic residues. Residues Asn676 to Asp705 are disordered. 6 disulfide bridges follow: Cys707–Cys743, Cys721–Cys740, Cys774–Cys810, Cys788–Cys807, Cys849–Cys885, and Cys863–Cys882. The disordered stretch occupies residues Ala751 to Asp775. The interval Ala818–Cys849 is disordered. Residues Glu895–Ser905 show a composition bias toward basic and acidic residues. Positions Glu895–Glu915 are disordered. Cystine bridges form between Cys916–Cys952 and Cys930–Cys949. Residues Gln967–Gln977 are compositionally biased toward basic and acidic residues. The tract at residues Gln967–Ser987 is disordered. Cystine bridges form between Cys993-Cys1028, Cys1006-Cys1025, and Cys1014-Cys1046. The tract at residues Arg1041–Glu1064 is disordered.

In terms of processing, proteolytically processed by furin in individual domains (D1, D5, D6, D8 through D11, and D9 through D15) exhibiting various inhibitory potentials for multiple proteases. Highly expressed in the thymus and stratum corneum. Also found in the oral mucosa, parathyroid gland, Bartholin's glands, tonsils, and vaginal epithelium. Very low levels are detected in lung, kidney, and prostate.

It localises to the secreted. Functionally, serine protease inhibitor, probably important for the anti-inflammatory and/or antimicrobial protection of mucous epithelia. Contribute to the integrity and protective barrier function of the skin by regulating the activity of defense-activating and desquamation-involved proteases. Inhibits KLK5, it's major target, in a pH-dependent manner. Inhibits KLK7, KLK14 CASP14, and trypsin. The chain is Serine protease inhibitor Kazal-type 5 (SPINK5) from Homo sapiens (Human).